Here is a 339-residue protein sequence, read N- to C-terminus: Serpentine receptor class delta-32 (339 aa).

7 helical membrane-spanning segments follow: residues 14–34 (AAVV…LIFF), 45–65 (VFLA…LLTV), 94–114 (IFTT…LSMV), 128–148 (SGAF…VVSI), 188–208 (LWVA…MFWC), 237–257 (ALTV…LIFL), and 269–289 (FGYI…LVTI).

The protein belongs to the nematode receptor-like protein srd family.

The protein resides in the membrane. This Caenorhabditis elegans protein is Serpentine receptor class delta-32 (srd-32).